The following is a 522-amino-acid chain: Response regulator mcs4 (522 aa).

Residues 148–274 (DSLESPVSAP…RSISHSSLYT (127 aa)) form a disordered region. Positions 174–194 (NLRNASRTRSHQTLPSSNVNK) are enriched in polar residues. The span at 244-255 (RSDESTAEKLAK) shows a compositional bias: basic and acidic residues. Over residues 260 to 274 (TPTNSRSISHSSLYT) the composition is skewed to polar residues. In terms of domain architecture, Response regulatory spans 363–505 (NVLIVEDNII…WLEKKITEWG (143 aa)). Residue aspartate 412 is modified to 4-aspartylphosphate.

Its subcellular location is the cytoplasm. Functionally, response regulator that coordinately controls the stress activated wak1-wis1-sty1 MAP kinase pathway and fission yeast cell cycle. In Schizosaccharomyces pombe (strain 972 / ATCC 24843) (Fission yeast), this protein is Response regulator mcs4 (mcs4).